A 152-amino-acid chain; its full sequence is ADP-ribose glycohydrolase OARD1 (152 aa).

A2 bears the N-acetylalanine mark. Residues 2–152 (AGSPNEDSEG…TDIRITVYTL (151 aa)) enclose the Macro domain. S4 carries the post-translational modification Phosphoserine. L21 serves as a coordination point for substrate. The Nucleophile role is filled by K84. Residues 119–125 (RIGCGLD) and L152 contribute to the substrate site. Residue D125 is the Proton acceptor of the active site.

It localises to the nucleus. The protein resides in the nucleoplasm. The protein localises to the nucleolus. Its subcellular location is the chromosome. The catalysed reaction is 2''-O-acetyl-ADP-D-ribose + H2O = ADP-D-ribose + acetate + H(+). The enzyme catalyses 5-O-(ADP-D-ribosyl)-L-glutamyl-[protein] + H2O = L-glutamyl-[protein] + ADP-D-ribose + H(+). It catalyses the reaction alpha-NAD(+) + H2O = ADP-D-ribose + nicotinamide + H(+). Its activity is regulated as follows. Subject to competitive inhibition by the product ADP-ribose. ADP-ribose glycohydrolase that hydrolyzes ADP-ribose and acts on different substrates, such as proteins ADP-ribosylated on glutamate and O-acetyl-ADP-D-ribose. Specifically acts as a glutamate mono-ADP-ribosylhydrolase by mediating the removal of mono-ADP-ribose attached to glutamate residues on proteins. Does not act on poly-ADP-ribosylated proteins: the poly-ADP-ribose chain of poly-ADP-ribosylated glutamate residues must by hydrolyzed into mono-ADP-ribosylated glutamate by PARG to become a substrate for OARD1. Deacetylates O-acetyl-ADP ribose, a signaling molecule generated by the deacetylation of acetylated lysine residues in histones and other proteins. Catalyzes the deacylation of O-acetyl-ADP-ribose, O-propionyl-ADP-ribose and O-butyryl-ADP-ribose, yielding ADP-ribose plus acetate, propionate and butyrate, respectively. This is ADP-ribose glycohydrolase OARD1 from Bos taurus (Bovine).